Here is a 152-residue protein sequence, read N- to C-terminus: Ribonuclease H (152 aa).

In terms of domain architecture, RNase H type-1 spans 1–142 (MKEVTIYTDG…CDELARAAIA (142 aa)). Residues Asp-9, Glu-47, Asp-69, and Asp-134 each contribute to the Mg(2+) site.

It belongs to the RNase H family. Monomer. The cofactor is Mg(2+).

The protein resides in the cytoplasm. It carries out the reaction Endonucleolytic cleavage to 5'-phosphomonoester.. Its function is as follows. Endonuclease that specifically degrades the RNA of RNA-DNA hybrids. The chain is Ribonuclease H from Moorella thermoacetica (strain ATCC 39073 / JCM 9320).